Consider the following 908-residue polypeptide: Transferrin-binding protein A (908 aa).

The signal sequence occupies residues 1-24 (MQQQHLFRLNILCLSLMTALPVYA). The short motif at 38–45 (DTIQVKAK) is the TonB box element. Residues 51 to 176 (RDNEVTGLGK…LAGSVAFQTK (126 aa)) enclose the TBDR plug domain. In terms of domain architecture, TBDR beta-barrel spans 187–908 (QWGIQSKTAY…NYTFSLEMKF (722 aa)). A TonB C-terminal box motif is present at residues 891-908 (NRYAAPGRNYTFSLEMKF).

This sequence belongs to the TonB-dependent receptor family. Binds both human apo- and holo-transferrin (TF), via the TF C-terminus. Forms a large complex with TF and TbpB.

Its subcellular location is the cell outer membrane. Its function is as follows. Neisseria acquires iron by extracting it from serum transferrin (TF) in its human host. Acts as a TF receptor and is required for TF utilization. Binds both apo- and holo-TF, via the TF C-terminus. The polypeptide is Transferrin-binding protein A (Neisseria meningitidis serogroup B).